The sequence spans 616 residues: Homeodomain-interacting protein kinase 4 (616 aa).

Residues Y11 to V347 enclose the Protein kinase domain. ATP-binding positions include L17–V25 and K40. The active-site Proton acceptor is the D136. A disordered region spans residues H487–H616. A compositionally biased stretch (polar residues) spans K497–S512. S512 is modified (phosphoserine). The segment covering R542 to G560 has biased composition (basic and acidic residues).

This sequence belongs to the protein kinase superfamily. CMGC Ser/Thr protein kinase family. HIPK subfamily. In terms of processing, autophosphorylated. Expressed at moderate levels in lung and white adipose tissues and weakly in brain and liver.

It is found in the cytoplasm. The enzyme catalyses L-seryl-[protein] + ATP = O-phospho-L-seryl-[protein] + ADP + H(+). The catalysed reaction is L-threonyl-[protein] + ATP = O-phospho-L-threonyl-[protein] + ADP + H(+). Protein kinase that phosphorylates murine TP53 at Ser-9, and thus induces TP53 repression of BIRC5 promoter. May act as a corepressor of transcription factors (Potential). This chain is Homeodomain-interacting protein kinase 4 (Hipk4), found in Mus musculus (Mouse).